A 971-amino-acid chain; its full sequence is UPF0182 protein CMS1887 (971 aa).

Transmembrane regions (helical) follow at residues 16 to 36 (LAIT…FAGF), 56 to 76 (WGAG…PVFV), 108 to 128 (LAMF…ASSG), 161 to 181 (FYHA…LGVL), 205 to 225 (IQIA…IWLD), 255 to 275 (TILA…AAIG), and 281 to 301 (IIGT…YPAI). Positions 687–702 (QDLWTTPNDPTATTEA) are enriched in polar residues. Disordered stretches follow at residues 687-706 (QDLW…GTPA) and 874-924 (GATA…AQDV). Low complexity-rich tracts occupy residues 884–900 (PTTP…TDGA) and 907–921 (STPT…AAPA).

The protein belongs to the UPF0182 family.

The protein resides in the cell membrane. This chain is UPF0182 protein CMS1887, found in Clavibacter sepedonicus (Clavibacter michiganensis subsp. sepedonicus).